The sequence spans 407 residues: D-3-phosphoglycerate dehydrogenase (407 aa).

Residues 161–162 (HI), D181, 238–240 (ASR), and D264 each bind NAD(+). Residue R240 is part of the active site. E269 is an active-site residue. Catalysis depends on H292, which acts as the Proton donor. Position 292–295 (292–295 (HIGG)) interacts with NAD(+). One can recognise an ACT domain in the interval 340 to 407 (RILNIHNNKP…PNSIKTRVLY (68 aa)).

The protein belongs to the D-isomer specific 2-hydroxyacid dehydrogenase family.

It catalyses the reaction (2R)-3-phosphoglycerate + NAD(+) = 3-phosphooxypyruvate + NADH + H(+). The catalysed reaction is (R)-2-hydroxyglutarate + NAD(+) = 2-oxoglutarate + NADH + H(+). Its pathway is amino-acid biosynthesis; L-serine biosynthesis; L-serine from 3-phospho-D-glycerate: step 1/3. In terms of biological role, catalyzes the reversible oxidation of 3-phospho-D-glycerate to 3-phosphonooxypyruvate, the first step of the phosphorylated L-serine biosynthesis pathway. Also catalyzes the reversible oxidation of 2-hydroxyglutarate to 2-oxoglutarate. The sequence is that of D-3-phosphoglycerate dehydrogenase (serA) from Dictyostelium discoideum (Social amoeba).